The sequence spans 108 residues: UPF0060 membrane protein Nham_2004 (108 aa).

4 helical membrane passes run 5–25 (AAYVGAAVAEIAGCFAFWAWL), 31–51 (VWWLAPGMVSLALFAYLLTLV), 61–81 (AAYGGVYIIASLGWLWSVEGL), and 88–108 (LTGAAICLLGAAIILFGPRQI).

It belongs to the UPF0060 family.

The protein resides in the cell inner membrane. The polypeptide is UPF0060 membrane protein Nham_2004 (Nitrobacter hamburgensis (strain DSM 10229 / NCIMB 13809 / X14)).